Consider the following 484-residue polypeptide: tRNA-2-methylthio-N(6)-dimethylallyladenosine synthase (484 aa).

The region spanning 29 to 149 (GVFHIHTLGC…LPKLLDQNRA (121 aa)) is the MTTase N-terminal domain. [4Fe-4S] cluster contacts are provided by Cys-38, Cys-78, Cys-112, Cys-186, Cys-190, and Cys-193. A Radical SAM core domain is found at 172-401 (RASRISSWVA…VALQEQITEE (230 aa)). The 71-residue stretch at 404-474 (ATFEGRDVEV…RHNLLADPDV (71 aa)) folds into the TRAM domain.

This sequence belongs to the methylthiotransferase family. MiaB subfamily. Monomer. Requires [4Fe-4S] cluster as cofactor.

The protein localises to the cytoplasm. It carries out the reaction N(6)-dimethylallyladenosine(37) in tRNA + (sulfur carrier)-SH + AH2 + 2 S-adenosyl-L-methionine = 2-methylsulfanyl-N(6)-dimethylallyladenosine(37) in tRNA + (sulfur carrier)-H + 5'-deoxyadenosine + L-methionine + A + S-adenosyl-L-homocysteine + 2 H(+). In terms of biological role, catalyzes the methylthiolation of N6-(dimethylallyl)adenosine (i(6)A), leading to the formation of 2-methylthio-N6-(dimethylallyl)adenosine (ms(2)i(6)A) at position 37 in tRNAs that read codons beginning with uridine. The polypeptide is tRNA-2-methylthio-N(6)-dimethylallyladenosine synthase (Bifidobacterium longum (strain DJO10A)).